The chain runs to 806 residues: Integrin beta-7 (806 aa).

Positions 1-19 (MVDSSTVLIFLLVLGGGQS) are cleaved as a signal peptide. The Extracellular portion of the chain corresponds to 20 to 724 (ELDTKITSSG…PQEKGVDHTR (705 aa)). The PSI domain maps to 44–92 (SCQPVPSCQKCILSHPSCAWCKQLNFTASGEAEARRCARREELLARGCP). 26 cysteine pairs are disulfide-bonded: C51–C476, C54–C80, C64–C91, C216–C223, C271–C311, C412–C428, C448–C474, C478–C497, C488–C500, C502–C511, C513–C545, C527–C543, C537–C548, C550–C559, C561–C582, C566–C580, C574–C585, C587–C596, C598–C621, C605–C619, C613–C624, C626–C635, C638–C641, C645–C688, C651–C670, and C654–C666. N68 carries an N-linked (GlcNAc...) asparagine glycan. Over residues 98 to 107 (EPRGRQEVLQ) the composition is skewed to basic and acidic residues. Residues 98–123 (EPRGRQEVLQDKPLSQGDRGEGATQL) are disordered. Residues 150–389 (YPVDLYYLMD…QLIMDAYDSL (240 aa)) enclose the VWFA domain. S161 and S163 together coordinate Mg(2+). Ca(2+) contacts are provided by S163, D166, D167, and D198. N250 is a glycosylation site (N-linked (GlcNAc...) asparagine). The Ca(2+) site is built by N254, D256, P258, and E259. E259 is a binding site for Mg(2+). The N-linked (GlcNAc...) asparagine glycan is linked to N279. Ca(2+) is bound by residues D289 and E373. N434 carries N-linked (GlcNAc...) asparagine glycosylation. I-EGF domains are found at residues 478–512 (CGDA…QLCE), 513–560 (CSEA…RLCE), 561–597 (CDDA…RACE), and 598–636 (CSKS…ALCD). N-linked (GlcNAc...) asparagine glycosylation is present at N531. N590 is a glycosylation site (N-linked (GlcNAc...) asparagine). 2 N-linked (GlcNAc...) asparagine glycosylation sites follow: N665 and N674. A helical transmembrane segment spans residues 725-745 (AIILGCTGGIVAVGLGLVLAY). Topologically, residues 746–806 (RLSVEIYDRR…PSLSLTREAD (61 aa)) are cytoplasmic. A disordered region spans residues 786–806 (NPRFQGTNGRSPSLSLTREAD).

This sequence belongs to the integrin beta chain family. Heterodimer of an alpha and a beta subunit. ITGB7/beta-7 associates with either ITGA4/alpha-4 or ITGAE/alpha-E. Integrin ITGA4/ITGB7 interacts with MADCAM1. Integrin ITGA4/ITGB7 interacts with VCAM1 and fibronectin. Interacts with FLNA (via filamin repeats 4, 9, 12, 17, 19, 21, and 23).

The protein localises to the cell membrane. Its function is as follows. Integrin ITGA4/ITGB7 (alpha-4/beta-7) (Peyer patches-specific homing receptor LPAM-1) is an adhesion molecule that mediates lymphocyte migration and homing to gut-associated lymphoid tissue (GALT). Integrin ITGA4/ITGB7 interacts with the cell surface adhesion molecules MADCAM1 which is normally expressed by the vascular endothelium of the gastrointestinal tract. Also interacts with VCAM1 and fibronectin, an extracellular matrix component. It recognizes one or more domains within the alternatively spliced CS-1 region of fibronectin. Interactions involve the tripeptide L-D-T in MADCAM1, and L-D-V in fibronectin. Integrin ITGAE/ITGB7 (alpha-E/beta-7, HML-1) is a receptor for E-cadherin. The protein is Integrin beta-7 (Itgb7) of Mus musculus (Mouse).